Consider the following 126-residue polypeptide: DNA-directed RNA polymerase 35 kDa subunit (126 aa).

It belongs to the poxviridae DNA-directed RNA polymerase 35 kDa subunit family. The DNA-dependent RNA polymerase used for intermediate and late genes expression consists of eight subunits 147 kDa, 133 kDa, 35 kDa, 30 kDa, 22 kDa, 19 kDa, 18 kDa and 7 kDa totalling more than 500 kDa in mass. The same holoenzyme, with the addition of the transcription-specificity factor RAP94, is used for early gene expression.

The protein resides in the virion. It carries out the reaction RNA(n) + a ribonucleoside 5'-triphosphate = RNA(n+1) + diphosphate. Its function is as follows. Part of the DNA-dependent RNA polymerase which catalyzes the transcription of viral DNA into RNA using the four ribonucleoside triphosphates as substrates. Responsible for the transcription of early, intermediate and late genes. DNA-dependent RNA polymerase associates with the early transcription factor (ETF) thereby allowing the early genes transcription. Late transcription, and probably also intermediate transcription, require newly synthesized RNA polymerase. In Ovis aries (Sheep), this protein is DNA-directed RNA polymerase 35 kDa subunit (RPO35).